A 168-amino-acid chain; its full sequence is Putative defense protein 1 (168 aa).

Residues 1 to 18 (MMFAYIVAVVSALALTSA) form the signal peptide. Positions 19–168 (FPTGAPRSAC…SAPVKILSHH (150 aa)) constitute a Reelin domain. The cysteines at positions 28 and 105 are disulfide-linked.

This sequence belongs to the insect defense protein family. In terms of tissue distribution, very highly expressed in midgut, and highly expressed in fat body, silk gland and epidermis.

The protein localises to the secreted. Functionally, as this protein is expressed upon bacterial infection, it may have antimicrobial activity. The protein is Putative defense protein 1 of Antheraea mylitta (Tasar silkworm).